The chain runs to 166 residues: Large ribosomal subunit protein uL10 (166 aa).

This sequence belongs to the universal ribosomal protein uL10 family. Part of the ribosomal stalk of the 50S ribosomal subunit. The N-terminus interacts with L11 and the large rRNA to form the base of the stalk. The C-terminus forms an elongated spine to which L12 dimers bind in a sequential fashion forming a multimeric L10(L12)X complex.

In terms of biological role, forms part of the ribosomal stalk, playing a central role in the interaction of the ribosome with GTP-bound translation factors. This chain is Large ribosomal subunit protein uL10, found in Pelagibacter ubique (strain HTCC1062).